The chain runs to 549 residues: Undecaprenyl phosphate-alpha-4-amino-4-deoxy-L-arabinose arabinosyl transferase (549 aa).

The next 12 membrane-spanning stretches (helical) occupy residues 9–29 (LLLI…GLWI), 80–100 (LFGV…LAYL), 112–132 (SLAC…SGYA), 133–153 (NLDP…WHAL), 176–196 (FLTK…PYML), 204–224 (LLGY…PWAL), 256–276 (PWWF…GLLP), 288–308 (QAPV…FSLS), 312–332 (LPTY…HALV), 346–366 (NGLL…YLQL), 376–396 (FELF…LAQW), and 402–422 (AWAA…AAMP).

Belongs to the glycosyltransferase 83 family.

The protein localises to the cell inner membrane. It carries out the reaction 4-amino-4-deoxy-alpha-L-arabinopyranosyl di-trans,octa-cis-undecaprenyl phosphate + lipid IVA = lipid IIA + di-trans,octa-cis-undecaprenyl phosphate.. Its pathway is lipopolysaccharide metabolism; 4-amino-4-deoxy-beta-L-arabinose-lipid A biosynthesis. Its function is as follows. Catalyzes the transfer of the L-Ara4N moiety of the glycolipid undecaprenyl phosphate-alpha-L-Ara4N to lipid A. The modified arabinose is attached to lipid A and is required for resistance to polymyxin and cationic antimicrobial peptides. This Pseudomonas aeruginosa (strain LESB58) protein is Undecaprenyl phosphate-alpha-4-amino-4-deoxy-L-arabinose arabinosyl transferase.